The chain runs to 119 residues: Small ribosomal subunit protein bS6 (119 aa).

The segment at 96–119 (VTEPSPLARSQEKDEEEGGRTAEA) is disordered.

It belongs to the bacterial ribosomal protein bS6 family.

In terms of biological role, binds together with bS18 to 16S ribosomal RNA. The chain is Small ribosomal subunit protein bS6 from Alkalilimnicola ehrlichii (strain ATCC BAA-1101 / DSM 17681 / MLHE-1).